The primary structure comprises 141 residues: Large ribosomal subunit protein uL14 (141 aa).

The protein belongs to the universal ribosomal protein uL14 family. As to quaternary structure, part of the 50S ribosomal subunit. Forms a cluster with proteins L3 and L24e, part of which may contact the 16S rRNA in 2 intersubunit bridges.

Functionally, binds to 23S rRNA. Forms part of two intersubunit bridges in the 70S ribosome. The sequence is that of Large ribosomal subunit protein uL14 from Pyrococcus abyssi (strain GE5 / Orsay).